The primary structure comprises 387 residues: Patatin-13 (387 aa).

A signal peptide spans 1 to 23; it reads MATTKSVLVLIFMILATTSSTFA. One can recognise a PNPLA domain in the interval 32-230; the sequence is LSVDGGGIKG…TVADPALLSV (199 aa). The short motif at 36–41 is the GXGXXG element; it reads GGGIKG. Residues 75-79 carry the GXSXG motif; sequence GTSTG. Residue S77 is the Nucleophile of the active site. N115 and N203 each carry an N-linked (GlcNAc...) asparagine glycan. The Proton acceptor role is filled by D216. Residues 216–218 carry the DGA/G motif; sequence DGA. The stretch at 361–385 forms a coiled coil; sequence ETYEEALKRFAKLLSDRKKLRANKA.

Belongs to the patatin family. As to expression, tuber.

The protein localises to the vacuole. Its function is as follows. Probable lipolytic acyl hydrolase (LAH), an activity which is thought to be involved in the response of tubers to pathogens. In Solanum tuberosum (Potato), this protein is Patatin-13.